Consider the following 256-residue polypeptide: Glucanase inhibitor protein 2 (256 aa).

The N-terminal stretch at 1–15 (MKLISTIAAATTAFG) is a signal peptide. The Peptidase S1 domain maps to 27-254 (IFGGGIIPSG…ATEWINSVTK (228 aa)). Cysteine 54 and cysteine 70 form a disulfide bridge. Residues asparagine 87, asparagine 102, asparagine 107, and asparagine 157 are each glycosylated (N-linked (GlcNAc...) asparagine). 2 disulfide bridges follow: cysteine 177–cysteine 189 and cysteine 199–cysteine 230.

The protein belongs to the peptidase S1 family. In terms of assembly, forms an apoplastic complex with host endoglucanases in tomato leaves during P.infestans infection.

It is found in the secreted. Its function is as follows. Secreted effector that suppresses host plant glucan elicitor-mediated defense responses. Targets host endoglucanases and inhibits the endoglucanase-mediated release of elicitor-active glucan oligosaccharides from P.infestans cell walls. The chain is Glucanase inhibitor protein 2 from Phytophthora infestans (Potato late blight agent).